The following is a 292-amino-acid chain: MNREDVEFPTCDGLILRGWLYPGTIRGPAIVMNQGFNTPKEILLPDVAVWFQQQGVTVLLYDNRCIGASDGEPRNDVKPAKLVEDFHDALTFMARHPMVDEDKIILYGYSFSAMTALVAAGLDHRVGAAISVTPIANYDFREKEKNNVMALAMQDRVSTLAGNDPVYIPFVGDDGYNPAGWGNQYNMEQFRAFLGTSFFTNRTTVQSYYHVLAWQPYGAMRLIKGTPVMMVTPAEDTISSPADQRAVFDMIPEPNKEFDLVAGRGHMDVINGEGAEEVLQRQLAFMRKHLDF.

The segment at 46–267 is abhydrolase domain; it reads DVAVWFQQQG…FDLVAGRGHM (222 aa).

The protein belongs to the polyketide transferase af380 family.

It catalyses the reaction fumagillol + dodecapentaneoyl-[polyketide synthase] = prefumagillin + holo-[polyketide synthase]. It functions in the pathway secondary metabolite biosynthesis; terpenoid biosynthesis. Polyketide transferase; part of the gene cluster that mediates the biosynthesis of fumagillin, a meroterpenoid that has numerous biological activities including irreversible inhibition of human type 2 methionine aminopeptidase (METAP2). Within the pathway, the polyketide transferase af380 catalyzes the transfer of a dodecapentaenoyl group synthesized by the polyketide synthase af370 onto 5R-hydroxy-seco-sesquiterpene to produce prefumagillin. The pathway begins with the conversion of farnesyl pyrophosphate (FPP) to beta-trans-bergamotene by the membrane-bound beta-trans-bergamotene synthase af520. The multifunctional cytochrome P450 monooxygenase af510 then converts beta-trans-bergamotene into 5-keto-demethoxyfumagillol via several oxydation steps. 5-keto-demethoxyfumagillol is then subjected to successive C-6 hydroxylation and O-methylation by the dioxygenase af480 and O-methyltransferase af390-400, respectively, to yield 5-keto-fumagillol, which is then stereoselectively reduced by the keto-reductase af490 to 5R-hydroxy-seco-sesquiterpene. The next step is the polyketide transferase af380-catalyzed transfer of a dodecapentaenoyl group synthesized by the polyketide synthase af370 onto 5R-hydroxy-seco-sesquiterpene which leads to the production of prefumagillin. Finally, oxidative cleavage by the monooxygenase af470 converts prefumagillin to fumagillin. The chain is Polyketide transferase af380 from Aspergillus fumigatus (strain ATCC MYA-4609 / CBS 101355 / FGSC A1100 / Af293) (Neosartorya fumigata).